Here is a 266-residue protein sequence, read N- to C-terminus: 3-methyl-2-oxobutanoate hydroxymethyltransferase 2 (266 aa).

Mg(2+)-binding residues include aspartate 45 and aspartate 84. 3-methyl-2-oxobutanoate is bound by residues 45–46, aspartate 84, and lysine 112; that span reads DS. Residue glutamate 114 participates in Mg(2+) binding. Residue glutamate 181 is the Proton acceptor of the active site.

This sequence belongs to the PanB family. In terms of assembly, homodecamer; pentamer of dimers. Mg(2+) serves as cofactor.

The protein resides in the cytoplasm. The catalysed reaction is 3-methyl-2-oxobutanoate + (6R)-5,10-methylene-5,6,7,8-tetrahydrofolate + H2O = 2-dehydropantoate + (6S)-5,6,7,8-tetrahydrofolate. It participates in cofactor biosynthesis; (R)-pantothenate biosynthesis; (R)-pantoate from 3-methyl-2-oxobutanoate: step 1/2. Catalyzes the reversible reaction in which hydroxymethyl group from 5,10-methylenetetrahydrofolate is transferred onto alpha-ketoisovalerate to form ketopantoate. This chain is 3-methyl-2-oxobutanoate hydroxymethyltransferase 2, found in Pseudomonas aeruginosa (strain UCBPP-PA14).